Reading from the N-terminus, the 339-residue chain is MSTSENTPFNGVASSTIVRATIVQASTVYNDTPATLEKANKFIVEAASKGSELVVFPEAFIGGYPRGFRFGLGVGVHNEEGRDEFRKYHASAIKVPGPEVEKLAELAGKNNVYLVMGAIEKDGYTLYCTALFFSPQGQFLGKHRKLMPTSLERCIWGQGDGSTIPVYDTPIGKLGAAICWENRMPLYRTALYAKGIELYCAPTADGSKEWQSSMLHIAIEGGCFVLSACQFCLRKDFPDHPDYLFTDWYDDKEPDSIVSQGGSVIISPLGQVLAGPNFESEGLITADLDLGDVARAKLYFDSVGHYSRPDVLHLTVNEHPKKPVTFISKVEKAEDDSNK.

Residue serine 2 is modified to N-acetylserine. A CN hydrolase domain is found at 18–290 (VRATIVQAST…EGLITADLDL (273 aa)). Glutamate 58 functions as the Proton acceptor in the catalytic mechanism. Lysine 145 (proton donor) is an active-site residue. The active-site Nucleophile is the cysteine 179.

This sequence belongs to the carbon-nitrogen hydrolase superfamily. Nitrilase family.

It localises to the cell membrane. It carries out the reaction a nitrile + 2 H2O = a carboxylate + NH4(+). Functionally, can convert indole-3-acetonitrile to the plant hormone indole-3-acetic acid. The polypeptide is Nitrilase 2 (NIT2) (Arabidopsis thaliana (Mouse-ear cress)).